The following is a 396-amino-acid chain: Elongation factor Tu 2 (396 aa).

The region spanning 10–206 (KPHVNIGTIG…AVDEYIPTPE (197 aa)) is the tr-type G domain. Positions 19–26 (GHVDHGKT) are G1. 19–26 (GHVDHGKT) provides a ligand contact to GTP. Mg(2+) is bound at residue threonine 26. The G2 stretch occupies residues 60 to 64 (GITIN). The tract at residues 81–84 (DCPG) is G3. GTP contacts are provided by residues 81 to 85 (DCPGH) and 136 to 139 (NKVD). The interval 136–139 (NKVD) is G4. Positions 174–176 (SAL) are G5.

Belongs to the TRAFAC class translation factor GTPase superfamily. Classic translation factor GTPase family. EF-Tu/EF-1A subfamily. In terms of assembly, monomer.

It is found in the cytoplasm. It carries out the reaction GTP + H2O = GDP + phosphate + H(+). Functionally, GTP hydrolase that promotes the GTP-dependent binding of aminoacyl-tRNA to the A-site of ribosomes during protein biosynthesis. The protein is Elongation factor Tu 2 of Hyphomonas neptunium (strain ATCC 15444).